Reading from the N-terminus, the 818-residue chain is MAGTRRKSLQNRQVGSLLIFLCISVGDATTIRYSVAEEMESGSFVANVAKDLGLEVGKLAARGARLVSEGNKMHFRLHRKTGDLFVKEKLDRESLCGKADPCVLHFEVVLVEPLQSFRAEVRVFDINDNAPVFLNKEPLLKIPESTPLGSRFPLQSAQDLDVGLNGLQNYTLSANGYFHLHTRFCSHGPKYAELVLNKPLDREEQPEVNLTITAVDGGSPPKSGTAHIHVVVLDVNDHVPQFSRLVYRAQVSENSPNGSLVATVTAVDLDEGTNKAITYSLAQNPEAILKTFQIDPQNGEVRLRGPLDFEAIETYDIDIQATDGGGLSAHSKVLVEVVDVNDNPPEVMVSSVSSPLPEDSPPQTVVALFTIRDRDIRVGGKVTCFLREDLPFVIKPTFGNSYSLVTDRSLDREEVSGYNITIVAMDTGPPSLSAETMIEVLISDVNDNPPIFREDSYILTVRENNSPAVFIGKVHAEDLDLGENAQITYSLLPPKNGDLSVFAYISINSGNGKLYALRTMDYEAIQDFQFVVKATDGGFLSLSSQVTVRVVVLDDNDNRPMILYPLQNGTLPCNDLVPRSAEAGYLVTKVVAVDGDSGQNSWLSYHLLKATDLGLFSVQRQNGEIHTLRQISERDPMMQKLIILVQDHGQPALSTTVSLNILLVDGFSEPYLQFQDPTKHSRKVNPSTKYLVISLVILSFLFLLSVIVIFIIHVYQKIKYREKFTIQEHFYDDCNFSNNLVQGQGNGSLSRPCPYEMCSATGTGNSEFRFLKRFMPNFPFPHATGEIKMEAGSSLPPNSDRNKSQRLEGHDQVSDDYM.

An N-terminal signal peptide occupies residues 1–28 (MAGTRRKSLQNRQVGSLLIFLCISVGDA). At 29–691 (TTIRYSVAEE…RKVNPSTKYL (663 aa)) the chain is on the extracellular side. 5 consecutive Cadherin domains span residues 35–133 (VAEE…APVF), 138–242 (PLLK…VPQF), 243–347 (SRLV…PPEV), 348–452 (MVSS…PPIF), and 457–562 (YILT…RPMI). Asn-169, Asn-209, Asn-257, and Asn-419 each carry an N-linked (GlcNAc...) asparagine glycan. Asn-568 carries N-linked (GlcNAc...) asparagine glycosylation. One can recognise a Cadherin 6 domain in the interval 577 to 672 (VPRSAEAGYL…LVDGFSEPYL (96 aa)). Residues 692 to 712 (VISLVILSFLFLLSVIVIFII) traverse the membrane as a helical segment. Topologically, residues 713 to 818 (HVYQKIKYRE…GHDQVSDDYM (106 aa)) are cytoplasmic. The tract at residues 789–818 (MEAGSSLPPNSDRNKSQRLEGHDQVSDDYM) is disordered. Positions 800–818 (DRNKSQRLEGHDQVSDDYM) are enriched in basic and acidic residues.

The protein localises to the cell membrane. Its function is as follows. Potential calcium-dependent cell-adhesion protein. May be involved in the establishment and maintenance of specific neuronal connections in the brain. This Homo sapiens (Human) protein is Protocadherin beta-1 (PCDHB1).